The chain runs to 497 residues: Solute carrier family 2, facilitated glucose transporter member 6 (497 aa).

At methionine 1–arginine 36 the chain is on the cytoplasmic side. The Dileucine internalization motif signature appears at leucine 5–leucine 6. The helical transmembrane segment at valine 37–tyrosine 57 threads the bilayer. Topologically, residues threonine 58–alanine 80 are extracellular. A helical transmembrane segment spans residues serine 81–leucine 101. Over asparagine 102–alanine 115 the chain is Cytoplasmic. The helical transmembrane segment at valine 116–leucine 136 threads the bilayer. Residues glycine 137–arginine 138 lie on the Extracellular side of the membrane. Residues methionine 139–isoleucine 159 traverse the membrane as a helical segment. The Cytoplasmic portion of the chain corresponds to alanine 160–threonine 171. The chain crosses the membrane as a helical span at residues proline 172–tryptophan 192. Residue glutamine 173 participates in a D-hexose binding. Residue arginine 193 is a topological domain, extracellular. Residues tryptophan 194–proline 214 form a helical membrane-spanning segment. Residues asparagine 215–proline 273 are Cytoplasmic-facing. The chain crosses the membrane as a helical span at residues valine 274–valine 294. Glutamine 284–glutamine 285 contacts a D-hexose. Residues tyrosine 295–aspartate 312 are Extracellular-facing. A glycan (N-linked (GlcNAc...) asparagine) is linked at asparagine 302. The chain crosses the membrane as a helical span at residues alanine 313–leucine 333. Over alanine 334–lysine 337 the chain is Cytoplasmic. A helical transmembrane segment spans residues valine 338 to valine 358. The Extracellular segment spans residues glutamine 359 to threonine 385. A glycan (N-linked (GlcNAc...) asparagine) is linked at asparagine 368. The chain crosses the membrane as a helical span at residues leucine 386 to isoleucine 406. Residues threonine 407–glycine 425 lie on the Cytoplasmic side of the membrane. Tryptophan 408 contributes to the a D-hexose binding site. The helical transmembrane segment at leucine 426 to valine 446 threads the bilayer. Asparagine 447 is a topological domain (extracellular). The helical transmembrane segment at alanine 448 to phenylalanine 468 threads the bilayer. Residues threonine 469 to proline 497 are Cytoplasmic-facing.

This sequence belongs to the major facilitator superfamily. Sugar transporter (TC 2.A.1.1) family. Mainly expressed in brain and spleen. Also expressed in lung, heart, muscle, liver, kidney, fat, whole blood, testes, ovaries and uterus.

It localises to the lysosome membrane. In terms of biological role, probable sugar transporter that acts as a regulator of glycolysis in macrophages. Does not transport glucose. The sequence is that of Solute carrier family 2, facilitated glucose transporter member 6 from Mus musculus (Mouse).